The following is a 1762-amino-acid chain: Non-reducing polyketide synthase PKS8-1 (1762 aa).

The segment at 17–247 (DIYRGLHNHS…ARYIELPVYG (231 aa)) is N-terminal acylcarrier protein transacylase domain (SAT). Residues 385 to 819 (QSKLAITGIS…GGNTTMVLEE (435 aa)) enclose the Ketosynthase family 3 (KS3) domain. Catalysis depends on for beta-ketoacyl synthase activity residues Cys558, His694, and His737. Residues 920-1240 (FSFTGQGASH…MAALHLTGVA (321 aa)) are malonyl-CoA:ACP transacylase (MAT) domain. Residues 1308–1622 (TSTVQQVIAL…PRILLNRFFS (315 aa)) are product template (PT) domain. The tract at residues 1312–1448 (QQVIALEVEG…GDANDWLSSW (137 aa)) is N-terminal hotdog fold. The PKS/mFAS DH domain maps to 1312–1618 (QQVIALEVEG…FRSYPRILLN (307 aa)). Residue His1344 is the Proton acceptor; for dehydratase activity of the active site. A C-terminal hotdog fold region spans residues 1471–1618 (ASRFTRNMAY…FRSYPRILLN (148 aa)). Asp1529 functions as the Proton donor; for dehydratase activity in the catalytic mechanism. A disordered region spans residues 1632-1689 (RAGNAATVTPQVTIPKPPSSLKTPAPANPSRRDSGVESKPLPPPQPKQAPPSTDSENS). Over residues 1671 to 1680 (PLPPPQPKQA) the composition is skewed to pro residues. The Carrier domain maps to 1685 to 1762 (DSENSTISKA…DMRRWLEEHY (78 aa)). Ser1722 carries the O-(pantetheine 4'-phosphoryl)serine modification.

It catalyses the reaction holo-[ACP] + 8 malonyl-CoA + 8 H(+) = atrochrysone carboxyl-[ACP] + 8 CO2 + 8 CoA + 2 H2O. The protein operates within secondary metabolite biosynthesis. Functionally, non-reducing polyketide synthase; part of the gene cluster that mediates the biosynthesis of an emodin derivative that may be involved in black Sigatoka disease of banana. The pathway begins with the synthesis of atrochrysone thioester by the polyketide synthase PKS8-1. The atrochrysone carboxyl ACP thioesterase MYCFIDRAFT_190111 then breaks the thioester bond and releases the atrochrysone carboxylic acid from PKS8-1. The decarboxylase MYCFIDRAFT_34057 then catalyzes the concerted decarboxylation-elimination required to convert atochrysone carboxylic acid into emodin anthrone, which is further oxidized to emodin by the anthrone oxygenase MYCFIDRAFT_34418. The functions of the other tailoring enzymes as well as the final product of the cluster have still to be identified. This chain is Non-reducing polyketide synthase PKS8-1 (PKS8-1), found in Pseudocercospora fijiensis (strain CIRAD86) (Black leaf streak disease fungus).